The primary structure comprises 73 residues: MSKLVILAVLVLLPLVTAEHGRDEQAMQPEKKTMWTLWSLTRRGECDGKKDCITNDDCTGCLCSDFGSYRKCA.

Positions 1–18 (MSKLVILAVLVLLPLVTA) are cleaved as a signal peptide. The propeptide occupies 19–41 (EHGRDEQAMQPEKKTMWTLWSLT). Cystine bridges form between cysteine 46–cysteine 61, cysteine 52–cysteine 63, and cysteine 58–cysteine 72.

As to expression, expressed by the venom duct.

Its subcellular location is the secreted. The sequence is that of Conotoxin Cl9.2 from Californiconus californicus (California cone).